Reading from the N-terminus, the 372-residue chain is Monocyte differentiation antigen CD14 (372 aa).

The N-terminal stretch at 1–17 (MKLMLGLLLLPLTLVHA) is a signal peptide. 2 disulfides stabilise this stretch: Cys-25-Cys-38 and Cys-36-Cys-53. N-linked (GlcNAc...) asparagine glycosylation is found at Asn-39 and Asn-46. LRR repeat units follow at residues 57-84 (EDVEFYGGGRSLEYLLKRVDTEANLGQY), 85-120 (TDIIRSLPLKRLTVRSARVPTQILFGTLRVLGYSGL), 121-146 (RELTLENLEVTGTALSPLLDATGPDL), 147-174 (NTLSLRNVSWATTDTWLAELQQWLKPGL), 175-198 (KVLSIAQAHSLNFSCKQVGVFPAL), 199-226 (ATLDLSDNPELGEKGLISALCPHKFPTL), 227-253 (QVLALRNAGMETTSGVCSALAAARVPL), 254-278 (QALDLSHNSLRDTAGTPSCDWPSQL), 279-299 (NSLNLSFTGLEHVPKGLPAKL), 300-321 (SVLDLSYNRLDRKPRPEELPEV), and 322-346 (GSLSLTGNPFLHSESQSEAYNSGVV). Asn-153 and Asn-186 each carry an N-linked (GlcNAc...) asparagine glycan. 2 disulfides stabilise this stretch: Cys-189–Cys-219 and Cys-243–Cys-272. N-linked (GlcNAc...) asparagine glycosylation occurs at Asn-282. Residues 290–372 (HVPKGLPAKL…ALLLGHRLFV (83 aa)) are required for response to bacterial lipopolysaccharide (LPS). The GPI-anchor amidated asparagine moiety is linked to residue Asn-342. The propeptide at 343 to 372 (SGVVIATALSPGSAGLSGTLALLLGHRLFV) is removed in mature form.

In terms of assembly, belongs to the lipopolysaccharide (LPS) receptor, a multi-protein complex containing at least CD14, LY96 and TLR4. Interacts with LPS-bound LPB. Interacts with LPAR1. Interacts with the TLR2:TLR6 or TLR2:TLR1 heterodimers; upon interaction with ligands such as diacylated lipopeptides and triacylated lipopeptides, respectively. Interacts with MYO18A. Interacts with FSTL1. In terms of tissue distribution, detected in macrophages and peripheral blood monocytes.

The protein localises to the cell membrane. It is found in the secreted. Its subcellular location is the membrane raft. It localises to the golgi apparatus. Its function is as follows. Coreceptor for bacterial lipopolysaccharide. In concert with LBP, binds to monomeric lipopolysaccharide and delivers it to the LY96/TLR4 complex, thereby mediating the innate immune response to bacterial lipopolysaccharide (LPS). Acts via MyD88, TIRAP and TRAF6, leading to NF-kappa-B activation, cytokine secretion and the inflammatory response. Acts as a coreceptor for TLR2:TLR6 heterodimer in response to diacylated lipopeptides and for TLR2:TLR1 heterodimer in response to triacylated lipopeptides, these clusters trigger signaling from the cell surface and subsequently are targeted to the Golgi in a lipid-raft dependent pathway. Binds electronegative LDL (LDL(-)) and mediates the cytokine release induced by LDL(-). In Rattus norvegicus (Rat), this protein is Monocyte differentiation antigen CD14 (Cd14).